The sequence spans 644 residues: Cyclin-dependent kinase C-2 C (644 aa).

The region spanning 105–389 is the Protein kinase domain; that stretch reads FQKLEKIGQG…ASSALNSEYF (285 aa). Residues 111–119 and Lys-134 contribute to the ATP site; that span reads IGQGTYSSV. Tyr-116 carries the post-translational modification Phosphotyrosine. The active-site Proton acceptor is Asp-229. Residue Thr-263 is modified to Phosphothreonine. The Nuclear localization signal motif lies at 420 to 427; that stretch reads RKRANLKL. Residues 565–576 show a composition bias toward basic and acidic residues; sequence SKLSRIGERHGS. The disordered stretch occupies residues 565–591; sequence SKLSRIGERHGSLDGSGLDFSQREEDS.

Belongs to the protein kinase superfamily. CMGC Ser/Thr protein kinase family. CDC2/CDKX subfamily. Autophosphorylated. As to expression, expressed specifically in flowers and pollen.

It is found in the nucleus. The sequence is that of Cyclin-dependent kinase C-2 C from Arabidopsis thaliana (Mouse-ear cress).